A 451-amino-acid polypeptide reads, in one-letter code: Runt-related transcription factor 1 (451 aa).

The segment at 1 to 37 (MRIPVDASTSRRFTPPSTALSPGKMSEALPLGAPDGG) is disordered. Polar residues predominate over residues 7–20 (ASTSRRFTPPSTAL). The residue at position 14 (threonine 14) is a Phosphothreonine. Serine 21 is modified (phosphoserine). 2 positions are modified to N6-acetyllysine: lysine 24 and lysine 43. Positions 50–178 (SMVEVLADHP…TVDGPREPRR (129 aa)) constitute a Runt domain. The interaction with DNA stretch occupies residues 80-84 (RCNKT). Chloride-binding residues include asparagine 112, glutamate 116, arginine 139, and valine 170. Interaction with DNA regions lie at residues 135 to 143 (RFVGRSGRG) and 168 to 177 (ITVDGPREPR). Disordered stretches follow at residues 170-195 (VDGP…LSFS) and 209-252 (MRVS…SPPW). A phosphoserine mark is found at serine 193 and serine 212. The span at 222 to 247 (PRASLNHSTAFNPQPQSQMQDARQIQ) shows a compositional bias: polar residues. Phosphoserine; by HIPK2 is present on serine 249. Residues serine 266 and serine 268 each carry the phosphoserine modification. Residues 268–290 (SVHPATPISPGRASGMTSLSAEL) are disordered. Phosphothreonine; by HIPK2 is present on threonine 273. Phosphoserine; by HIPK2 is present on serine 276. The segment at 291–370 (SSRLSTAPDL…SQAQAGPFQT (80 aa)) is interaction with KAT6A. The residue at position 296 (threonine 296) is a Phosphothreonine. An interaction with KAT6B region spans residues 307 to 399 (RQFPTLPSIS…MVGGERSPPR (93 aa)). Residues 361–401 (SQAQAGPFQTGSPSYHLYYGASAGSYQFSMVGGERSPPRIL) form an interaction with FOXP3 region. The disordered stretch occupies residues 406–451 (NASTGAALLNPSLPSQSDVVETEGSHSNSPTNMPPARLEEAVWRPY). Residues 417–436 (SLPSQSDVVETEGSHSNSPT) are compositionally biased toward polar residues. A Phosphoserine modification is found at serine 434. The segment covering 442–451 (RLEEAVWRPY) has biased composition (basic and acidic residues).

In terms of assembly, heterodimer with CBFB. RUNX1 binds DNA as a monomer and through the Runt domain. DNA-binding is increased by heterodimerization. Interacts with TLE1 and ALYREF/THOC4. Interacts with HIPK2, ELF1, ELF2 and SPI1. Interacts via its Runt domain with the ELF4 N-terminal region. Interaction with ELF2 isoform 2 (NERF-1a) may act to repress RUNX1-mediated transactivation. Interacts with KAT6A and KAT6B. Interacts with SUV39H1, leading to abrogation of transactivating and DNA-binding properties of RUNX1. Interacts with YAP1. Interaction with CDK6 prevents myeloid differentiation, reducing its transcription transactivation activity. Found in a complex with PRMT5, RUNX1 and CBFB. Interacts with FOXP3. Interacts with TBX21. Interacts with DPF2. Post-translationally, phosphorylated in its C-terminus upon IL-6 treatment. Phosphorylation enhances interaction with KAT6A. Methylated. In terms of processing, phosphorylated in Ser-249 Thr-273 and Ser-276 by HIPK2 when associated with CBFB and DNA. This phosphorylation promotes subsequent EP300 phosphorylation. Isoform 4 is expressed at high levels in thymus, spleen and T-cell lines and at lower levels in myeloid cell lines and nonhematopoietic cells. Isoform 5 is expressed ubiquitously in lumbar vertebrae, brain, kidney, heart, muscle, ovary and osteoblast-like cell line MC3T3-E1.

It is found in the nucleus. Forms the heterodimeric complex core-binding factor (CBF) with CBFB. RUNX members modulate the transcription of their target genes through recognizing the core consensus binding sequence 5'-TGTGGT-3', or very rarely, 5'-TGCGGT-3', within their regulatory regions via their runt domain, while CBFB is a non-DNA-binding regulatory subunit that allosterically enhances the sequence-specific DNA-binding capacity of RUNX. The heterodimers bind to the core site of a number of enhancers and promoters, including murine leukemia virus, polyomavirus enhancer, T-cell receptor enhancers, LCK, IL3 and GM-CSF promoters. Essential for the development of normal hematopoiesis. Acts synergistically with ELF4 to transactivate the IL-3 promoter and with ELF2 to transactivate the BLK promoter. Inhibits KAT6B-dependent transcriptional activation. Involved in lineage commitment of immature T cell precursors. CBF complexes repress ZBTB7B transcription factor during cytotoxic (CD8+) T cell development. They bind to RUNX-binding sequence within the ZBTB7B locus acting as transcriptional silencer and allowing for cytotoxic T cell differentiation. CBF complexes binding to the transcriptional silencer is essential for recruitment of nuclear protein complexes that catalyze epigenetic modifications to establish epigenetic ZBTB7B silencing. Controls the anergy and suppressive function of regulatory T-cells (Treg) by associating with FOXP3. Activates the expression of IL2 and IFNG and down-regulates the expression of TNFRSF18, IL2RA and CTLA4, in conventional T-cells. Positively regulates the expression of RORC in T-helper 17 cells. Its function is as follows. Isoform 4 shows higher binding activities for target genes and binds TCR-beta-E2 and RAG-1 target site with threefold higher affinity than other isoforms. It is less effective in the context of neutrophil terminal differentiation. The polypeptide is Runt-related transcription factor 1 (Runx1) (Mus musculus (Mouse)).